The sequence spans 185 residues: Ribosome-recycling factor (185 aa).

Belongs to the RRF family.

The protein resides in the cytoplasm. Functionally, responsible for the release of ribosomes from messenger RNA at the termination of protein biosynthesis. May increase the efficiency of translation by recycling ribosomes from one round of translation to another. This chain is Ribosome-recycling factor, found in Coxiella burnetii (strain RSA 493 / Nine Mile phase I).